A 442-amino-acid chain; its full sequence is 3-oxoacyl-[acyl-carrier-protein] synthase homolog (442 aa).

Residues 2–438 (SRRVVITGLG…GVNTSLLFKK (437 aa)) form the Ketosynthase family 3 (KS3) domain. Residues Cys187, His322, and His362 each act as for beta-ketoacyl synthase activity in the active site.

The protein belongs to the thiolase-like superfamily. Beta-ketoacyl-ACP synthases family.

The protein resides in the mitochondrion. It carries out the reaction a fatty acyl-[ACP] + malonyl-[ACP] + H(+) = a 3-oxoacyl-[ACP] + holo-[ACP] + CO2. In terms of biological role, possibly involved in the synthesis of a specialized molecule, probably related to a fatty acid, which is essential for mitochondrial respiration. Is essential for oxygen uptake and the presence of cytochromes A and B. This is 3-oxoacyl-[acyl-carrier-protein] synthase homolog (CEM1) from Saccharomyces cerevisiae (strain ATCC 204508 / S288c) (Baker's yeast).